A 682-amino-acid polypeptide reads, in one-letter code: Nephrocystin-1-like protein (682 aa).

Residues 10–100 (LQDAINRFPQ…ALSPEKEQLS (91 aa)) adopt a coiled-coil conformation. The tract at residues 96–188 (KEQLSFSVSV…PLESKTLNER (93 aa)) is disordered. Positions 128-148 (NDDESEDSDNDSEIIETDVQL) are enriched in acidic residues. In terms of domain architecture, SH3 spans 215 to 275 (VRGNVFVAID…PKTYLQHVKE (61 aa)).

It belongs to the nephrocystin-1 family. In terms of tissue distribution, expressed in ciliated sensory neurons of the head (amphid neurons) and the tail in hermaphrodites (phasmid neurons) and males (sensory ray neurons).

Its function is as follows. Plays a role in the extension of dendrites from phasmid ciliated sensory neurons. May be necessary for initial assembly of the cilium. In Caenorhabditis elegans, this protein is Nephrocystin-1-like protein.